A 458-amino-acid polypeptide reads, in one-letter code: uncharacterized protein (458 aa).

A run of 12 helical transmembrane segments spans residues 26-46, 47-67, 95-115, 125-145, 160-180, 208-228, 251-271, 278-298, 342-362, 365-385, 409-429, and 432-452; these read LIAIGGAIGTGLFLGSGKSIH, FAGPSILFAYMITGIICFLIM, AAFITGWTYWFCWISIAMADL, WLPGVPQWVPGLIALIILLIM, FALIKVIAILALIVIGLVMIF, GFILSFQMVVFAFVGIELVGL, VLLFYIGALLVIMSIYPWDII, FVQVFVAVGIVGAASIINFVV, ALFFSAIVILIGVTLNYIMPE, FTLITSISTVCFIYIWGITVI, PFTNYLILAFLAFVLVVLALA, and TRVSLFVTPVWFILLIVIYKV.

Belongs to the amino acid-polyamine-organocation (APC) superfamily.

It is found in the cell membrane. Its function is as follows. Probable amino-acid or metabolite transport protein. This is an uncharacterized protein from Bacillus subtilis (strain 168).